A 297-amino-acid chain; its full sequence is UTP--glucose-1-phosphate uridylyltransferase (297 aa).

The protein belongs to the UDPGP type 2 family.

The catalysed reaction is alpha-D-glucose 1-phosphate + UTP + H(+) = UDP-alpha-D-glucose + diphosphate. The protein operates within carbohydrate metabolism; nucleotide-sugar metabolism. It functions in the pathway bacterial outer membrane biogenesis; lipopolysaccharide biosynthesis. In Escherichia coli O157:H7, this protein is UTP--glucose-1-phosphate uridylyltransferase (galF).